We begin with the raw amino-acid sequence, 56 residues long: MFTVFLLVVLATTVVSFTSDRASDGGNAAMSDLIALTIKGCCSHPPCFLNNPDYCG.

The first 16 residues, 1-16, serve as a signal peptide directing secretion; that stretch reads MFTVFLLVVLATTVVS. The propeptide occupies 17–39; that stretch reads FTSDRASDGGNAAMSDLIALTIK. 2 disulfides stabilise this stretch: cysteine 41–cysteine 47 and cysteine 42–cysteine 55. Residues 43-45 are ser-Xaa-Pro motif, crucial for potent interaction with nAChR; sequence SHP. At cysteine 55 the chain carries Cysteine amide.

It belongs to the conotoxin A superfamily. In terms of processing, non-native isomers 'ribbon' (with disulfide connectivity C1-C4; C2-C3) and 'beads' (with disulfide connectivity C1-C2; C3-C4) also inhibit high voltage-activated (HVA) calcium channel currents in rat DRG neurons (20-30% inhibition at 1 uM toxin). Expressed by the venom duct.

The protein resides in the secreted. In terms of biological role, alpha-conotoxins act on postsynaptic membranes, they bind to the nicotinic acetylcholine receptors (nAChR) and thus inhibit them. This toxin inhibits human alpha-7/CHRNA7 and alpha-9-alpha-10/CHRNA9/CHRNA10 AChR (complete inhibition at 3 uM of toxin). In addition, this toxin inhibits high voltage-activated (HVA) calcium channel currents in rat DRG neurons (22% inhibition at 1 uM toxin) probably by activating GABA(B) receptors (GABBR1 and/or GABBR2). In Conus pennaceus (Feathered cone), this protein is Alpha-conotoxin Pn1.2.